We begin with the raw amino-acid sequence, 334 residues long: Probable tRNA pseudouridine synthase B (334 aa).

Asp82 functions as the Nucleophile in the catalytic mechanism. The PUA domain maps to 250–325 (LPKVWIRDSA…IAVDVDKVFM (76 aa)).

Belongs to the pseudouridine synthase TruB family. Type 2 subfamily.

The catalysed reaction is uridine(55) in tRNA = pseudouridine(55) in tRNA. Functionally, could be responsible for synthesis of pseudouridine from uracil-55 in the psi GC loop of transfer RNAs. The sequence is that of Probable tRNA pseudouridine synthase B from Thermococcus onnurineus (strain NA1).